Here is a 480-residue protein sequence, read N- to C-terminus: MSELGEYSKLENKELRTEFELTNFPFPGTTDNDSDDGSQGQNSLNIITPDMDDTLVNDVLRENDKKSSMRMAFMNLANSILGAGIITQPFAIKNAGILGGLLSYVALGFIVDWTLRLIVINLTLAGKRTYQGTVEHVMGKKGKLLILFTNGLFAFGGCIGYCIIIGDTIPHVLRAIFSQNDGNVHFWLRRNVIIVMVTTFISFPLSMKRNIEALSKASFLAVISMIIIVLTVVIRGPMLPYDWKGHSLKLSDFFMKATIFRSLSVISFALVCHHNTSFIFFSMRNRSVAKFTRLTHISIIISVICCALMGYSGFAVFKEKTKGNVLNSFPGTDTAINIARLCFGFNMLTTFPMEIFVLRDVVGNLLHECNLIKNYDEHTQLSGKQHVVITSSLVFITMGISLTTCNLGALFELIGATTASTMAYILPPYTNLLLTSKKKSWKERLPFYLCICFGFMIMIISSTQTIIDAVNGSDGQHCQI.

The disordered stretch occupies residues 21 to 48 (LTNFPFPGTTDNDSDDGSQGQNSLNIIT). A compositionally biased stretch (polar residues) spans 37-46 (GSQGQNSLNI). 9 consecutive transmembrane segments (helical) span residues 72–92 (AFMN…PFAI), 95–115 (AGIL…DWTL), 145–165 (LILF…CIII), 214–234 (LSKA…TVVI), 263–283 (LSVI…FFSM), 297–317 (ISII…FAVF), 338–358 (IARL…IFVL), 394–414 (VFIT…FELI), and 447–467 (FYLC…QTII).

Belongs to the amino acid/polyamine transporter 2 family.

Its subcellular location is the vacuole membrane. Its function is as follows. Probable amino acid transporter of unknown specificity. This is Vacuolar amino acid transporter 2 (AVT2) from Saccharomyces cerevisiae (strain ATCC 204508 / S288c) (Baker's yeast).